A 427-amino-acid chain; its full sequence is Serine hydroxymethyltransferase (427 aa).

Residues Leu118 and Gly122–Leu124 contribute to the (6S)-5,6,7,8-tetrahydrofolate site. At Lys227 the chain carries N6-(pyridoxal phosphate)lysine. (6S)-5,6,7,8-tetrahydrofolate-binding positions include Glu243 and Ser351–Phe353.

It belongs to the SHMT family. In terms of assembly, homodimer. It depends on pyridoxal 5'-phosphate as a cofactor.

The protein localises to the cytoplasm. It catalyses the reaction (6R)-5,10-methylene-5,6,7,8-tetrahydrofolate + glycine + H2O = (6S)-5,6,7,8-tetrahydrofolate + L-serine. The protein operates within one-carbon metabolism; tetrahydrofolate interconversion. Its pathway is amino-acid biosynthesis; glycine biosynthesis; glycine from L-serine: step 1/1. Functionally, catalyzes the reversible interconversion of serine and glycine with tetrahydrofolate (THF) serving as the one-carbon carrier. This reaction serves as the major source of one-carbon groups required for the biosynthesis of purines, thymidylate, methionine, and other important biomolecules. Also exhibits THF-independent aldolase activity toward beta-hydroxyamino acids, producing glycine and aldehydes, via a retro-aldol mechanism. This is Serine hydroxymethyltransferase from Thermotoga neapolitana (strain ATCC 49049 / DSM 4359 / NBRC 107923 / NS-E).